A 396-amino-acid chain; its full sequence is MAEDGLPKIYSHPPTESSKTPTAATIFFGADNAIPKSETTITSEGDHVTSVNEYVLESDFSTTADNKLTPTKEKLRSEDDMGTDFIKSTTHLQKEITSLTGTANSITRDSITENFMTVKIGNISSPVTTVSLIDFSTDIAKEDILLDTIDTGDAEILITSEVSGTLKDSSAGVADTPAFPRIKDEADMNNYNSSIKSNVPADEAIQVTDSIIPEAEIPPAPEVNFTTIPDITALEEEKMTKIDLSVLEDDTSAVATLTDSDEEKFITVFELTTSAEKDKDNQEDTLLTDEESPEGANMWMERETATEAETHSVLLTAVESRYDFVVPASIATNLVEDSSTEEELSETDRTETVPKITEPFSGTSSVLDTPDYKEDTSTTETDIFELLKEEPDEFMI.

The disordered stretch occupies residues 1–21; sequence MAEDGLPKIYSHPPTESSKTP. Residue Ser-274 is modified to Phosphoserine. The interval 276 to 296 is disordered; it reads EKDKDNQEDTLLTDEESPEGA. Acidic residues predominate over residues 283–293; it reads EDTLLTDEESP. Residue Thr-288 is modified to Phosphothreonine; by CK2. Phosphoserine occurs at positions 320 and 377. Residues 336 to 396 are disordered; sequence EDSSTEEELS…LKEEPDEFMI (61 aa).

The protein resides in the cytoplasm. It is found in the mitochondrion inner membrane. The protein localises to the cell projection. Its subcellular location is the cilium. It localises to the flagellum. The protein resides in the cytoplasmic vesicle. It is found in the secretory vesicle. The protein localises to the acrosome. Its function is as follows. Calcium-binding protein. Essential for maintaining the structural integrity of the sperm flagella. The polypeptide is Calcium-binding and spermatid-specific protein 1 (CABS1) (Macaca fascicularis (Crab-eating macaque)).